The following is a 136-amino-acid chain: uncharacterized protein (136 aa).

The protein localises to the mitochondrion. This is an uncharacterized protein from Marchantia polymorpha (Common liverwort).